We begin with the raw amino-acid sequence, 210 residues long: ATP phosphoribosyltransferase (210 aa).

Belongs to the ATP phosphoribosyltransferase family. Short subfamily. As to quaternary structure, heteromultimer composed of HisG and HisZ subunits.

Its subcellular location is the cytoplasm. It carries out the reaction 1-(5-phospho-beta-D-ribosyl)-ATP + diphosphate = 5-phospho-alpha-D-ribose 1-diphosphate + ATP. It participates in amino-acid biosynthesis; L-histidine biosynthesis; L-histidine from 5-phospho-alpha-D-ribose 1-diphosphate: step 1/9. Its function is as follows. Catalyzes the condensation of ATP and 5-phosphoribose 1-diphosphate to form N'-(5'-phosphoribosyl)-ATP (PR-ATP). Has a crucial role in the pathway because the rate of histidine biosynthesis seems to be controlled primarily by regulation of HisG enzymatic activity. This chain is ATP phosphoribosyltransferase, found in Caldanaerobacter subterraneus subsp. tengcongensis (strain DSM 15242 / JCM 11007 / NBRC 100824 / MB4) (Thermoanaerobacter tengcongensis).